Reading from the N-terminus, the 102-residue chain is Small ribosomal subunit protein uS10 (102 aa).

The protein belongs to the universal ribosomal protein uS10 family. As to quaternary structure, part of the 30S ribosomal subunit.

Its function is as follows. Involved in the binding of tRNA to the ribosomes. This chain is Small ribosomal subunit protein uS10, found in Kosmotoga olearia (strain ATCC BAA-1733 / DSM 21960 / TBF 19.5.1).